Reading from the N-terminus, the 955-residue chain is RNA polymerase-associated protein RapA (955 aa).

The region spanning 163–333 is the Helicase ATP-binding domain; it reads EVGHRYAPRV…FARLRLLDPE (171 aa). ATP is bound at residue 176–183; the sequence is DEVGLGKT. The short motif at 279 to 282 is the DEAH box element; that stretch reads DEAH. In terms of domain architecture, Helicase C-terminal spans 478-642; sequence RVEWLLELLL…AVRDELFELL (165 aa).

It belongs to the SNF2/RAD54 helicase family. RapA subfamily. In terms of assembly, interacts with the RNAP. Has a higher affinity for the core RNAP than for the holoenzyme. Its ATPase activity is stimulated by binding to RNAP.

Transcription regulator that activates transcription by stimulating RNA polymerase (RNAP) recycling in case of stress conditions such as supercoiled DNA or high salt concentrations. Probably acts by releasing the RNAP, when it is trapped or immobilized on tightly supercoiled DNA. Does not activate transcription on linear DNA. Probably not involved in DNA repair. The protein is RNA polymerase-associated protein RapA of Aeromonas hydrophila subsp. hydrophila (strain ATCC 7966 / DSM 30187 / BCRC 13018 / CCUG 14551 / JCM 1027 / KCTC 2358 / NCIMB 9240 / NCTC 8049).